We begin with the raw amino-acid sequence, 320 residues long: MQNRNTFSWVKEQMTRFISVSIMIYVITRTSISNAYPIFAQQGYENPREATGRIVCANCHLANKPVDIEVPQAVLPDTVFEAVVRIPYDMQLKQVLANGKKGALNVGAVLILPEGFELAPPDRISPEMKEKIGNLSFQSYRPTKRNILVVGPVPGQKYSEIVFPILSPDPATKKDVHFLKYPIYVGGNRGRGQIYPDGNKSNNTVYNATAAGIVNRIVRKEKGGYEITIADASDGHQVVDIIPPGPELLVSEGESIKLDQPLTSNPNVGGFGQGDAEIVLQDPLRVQGLLFFLASVILAQIFLVLKKKQFEKVQLSEMNF.

The N-terminal stretch at Met1–Ala35 is a signal peptide. Positions 36, 56, 59, and 60 each coordinate heme. A helical membrane pass occupies residues Val286–Lys306.

Belongs to the cytochrome f family. The 4 large subunits of the cytochrome b6-f complex are cytochrome b6, subunit IV (17 kDa polypeptide, petD), cytochrome f and the Rieske protein, while the 4 small subunits are PetG, PetL, PetM and PetN. The complex functions as a dimer. Heme is required as a cofactor.

The protein localises to the plastid. It is found in the chloroplast thylakoid membrane. Functionally, component of the cytochrome b6-f complex, which mediates electron transfer between photosystem II (PSII) and photosystem I (PSI), cyclic electron flow around PSI, and state transitions. In Liriodendron tulipifera (Tuliptree), this protein is Cytochrome f.